The chain runs to 192 residues: Ornithine lipid N-methyltransferase (192 aa).

The protein belongs to the methyltransferase superfamily.

The catalysed reaction is an N(2)-[(3R)-3-(2-saturated-acyloxy)acyl]-L-ornithine lipid + 3 S-adenosyl-L-methionine = an N,N,N-trimethylornithine lipid + 3 S-adenosyl-L-homocysteine + 3 H(+). Functionally, catalyzes the 3-fold methylation of ornithine lipids. Forms ornithine lipids that are mono-, di-, and trimethylated on the delta-nitrogen of the ornithine head group. The polypeptide is Ornithine lipid N-methyltransferase (Singulisphaera acidiphila (strain ATCC BAA-1392 / DSM 18658 / VKM B-2454 / MOB10)).